A 396-amino-acid chain; its full sequence is Argininosuccinate synthase (396 aa).

Alanine 9 to threonine 17 contributes to the ATP binding site. Position 86 (tyrosine 86) interacts with L-citrulline. An ATP-binding site is contributed by glycine 116. Threonine 118, asparagine 122, and aspartate 123 together coordinate L-aspartate. Asparagine 122 provides a ligand contact to L-citrulline. L-citrulline contacts are provided by arginine 126, serine 172, serine 181, glutamate 254, and tyrosine 266.

The protein belongs to the argininosuccinate synthase family. Type 1 subfamily. Homotetramer.

It is found in the cytoplasm. The catalysed reaction is L-citrulline + L-aspartate + ATP = 2-(N(omega)-L-arginino)succinate + AMP + diphosphate + H(+). It functions in the pathway amino-acid biosynthesis; L-arginine biosynthesis; L-arginine from L-ornithine and carbamoyl phosphate: step 2/3. The polypeptide is Argininosuccinate synthase (Halobacterium salinarum (strain ATCC 700922 / JCM 11081 / NRC-1) (Halobacterium halobium)).